The sequence spans 467 residues: ADAM DEC1 (467 aa).

The first 33 residues, 1–33 (MLPGTSRLPTEASMSWVLLSVLWLIIQIQVIDA), serve as a signal peptide directing secretion. Positions 34–208 (TLTPELKPHE…LRTSRSLKNP (175 aa)) are excised as a propeptide. 2 N-linked (GlcNAc...) asparagine glycosylation sites follow: N61 and N236. Residues 217–411 (KYIGLFLVLD…RNARCLLLAP (195 aa)) enclose the Peptidase M12B domain. 2 disulfides stabilise this stretch: C327-C406 and C368-C373. Residue H351 participates in Zn(2+) binding. The active site involves E352. Residues H355 and D361 each contribute to the Zn(2+) site. Residues 418–467 (KPTCGNQVLDVGEECDCGSPEECTNLCCEPLTCRLKSQPDCSEASNHITE) form the Disintegrin domain.

Zn(2+) serves as cofactor. As to expression, expressed highly in uterus during pregnancy.

It localises to the secreted. Functionally, may play an important role in the control of the immune response and during pregnancy. This Mus musculus (Mouse) protein is ADAM DEC1 (Adamdec1).